We begin with the raw amino-acid sequence, 102 residues long: Cuticle protein 10.9 (102 aa).

Gln-1 is subject to Pyrrolidone carboxylic acid. Residues 1–45 are disordered; sequence QLAEQYPPHPYSFSYDATDETGARISTSESGDESNSKTGSYSYQT. Positions 8–74 constitute a Chitin-binding type R&amp;R domain; sequence PHPYSFSYDA…SIDTNEPGTK (67 aa). Over residues 36–45 the composition is skewed to polar residues; the sequence is SKTGSYSYQT.

In terms of biological role, component of the cuticle of the tick. Binds chitin. This chain is Cuticle protein 10.9, found in Ixodes ricinus (Common tick).